The following is a 994-amino-acid chain: NACHT, LRR and PYD domains-containing protein 4 (994 aa).

Positions 1-94 constitute a Pyrin domain; it reads MAASFFSDFG…CMKVMRERTG (94 aa). Residues 149–472 form the NACHT domain; sequence RTVIIQGPQG…FYLLKSHLDH (324 aa). 155–162 is a binding site for ATP; that stretch reads GPQGIGKT. 8 LRR repeats span residues 637–660, 698–721, 722–745, 750–777, 806–833, 863–886, 920–943, and 949–972; these read SGHL…TWCN, YLSF…LNYP, AGNV…VLAG, NKKL…LCSP, NKSV…ALKH, NQNL…LLCR, SKTL…VLCE, and ECAL…LLTA.

The protein belongs to the NLRP family. In terms of assembly, interacts with CHUK/IKKA, inhibiting its kinase activity.

Its function is as follows. May be involved in inflammation and recognition of cytosolic pathogen-associated molecular patterns (PAMPs) not intercepted by membrane-bound receptors. Acts as a negative regulator of the type I interferon signaling pathway by serving as an adapter to promote DTX4-mediated ubiquitination of activated TBK1, and its subsequent degradation. Suppresses NF-kappaB induction by the cytokines TNFA and IL1B, suggesting that it operates at a point of convergence in these two cytokine signaling pathways. This chain is NACHT, LRR and PYD domains-containing protein 4, found in Homo sapiens (Human).